The chain runs to 119 residues: Autophagy-related protein 8c (119 aa).

Gly-117 is lipidated: Phosphatidylethanolamine amidated glycine. The propeptide at 118 to 119 (LV) is removed in mature form.

This sequence belongs to the ATG8 family. Interacts with ATG4. Interacts with NBR1. Post-translationally, the C-terminal 2 residues are removed by ATG4 to expose Gly-117 at the C-terminus. This Gly-117 forms then a thioester bond with the 'Cys-558' of ATG7 (E1-like activating enzyme) before being transferred to the 'Cys-258' of ATG3 (the specific E2 conjugating enzyme), in order to be finally amidated with phosphatidylethanolamine. This lipid modification anchors ATG8 to autophagosomes. As to expression, constitutively expressed.

The protein resides in the cytoplasmic vesicle. It localises to the autophagosome membrane. It is found in the vacuole membrane. Its subcellular location is the cytoplasm. The protein localises to the cytoskeleton. In terms of biological role, ubiquitin-like modifier involved in autophagosomes formation. May mediate the delivery of the autophagosomes to the vacuole via the microtubule cytoskeleton. The protein is Autophagy-related protein 8c (ATG8C) of Arabidopsis thaliana (Mouse-ear cress).